The chain runs to 566 residues: APC/C activator protein CDH1 (566 aa).

A compositionally biased stretch (polar residues) spans 1-18 (MSTNLNPFMNNTPSSSPL). The disordered stretch occupies residues 1-56 (MSTNLNPFMNNTPSSSPLKGSESKRVSKRPISSSSSASLLSSPSRRSRPSTVYGDR). Over residues 29–44 (RPISSSSSASLLSSPS) the composition is skewed to low complexity. Positions 55–61 (DRYIPSR) match the C-box motif. Serine 213 carries the phosphoserine modification. 7 WD repeats span residues 258–298 (PSLA…VVHL), 300–339 (DTENEYTSLSWIGAGSHLAVGQANGLVEIYDVMKRKCIRT), 342–379 (GHIDRVACLSWNNHVLTSGSRDHRILHRDVRMPDPFFE), 383–422 (SHTQEVCGLKWNVADNKLASGGNDNVVHVYEGTSKSPILT), 425–467 (EHKA…KMSD), 469–510 (DSGS…PIAI), and 513–552 (GHSFRVLHLTLSNDGTTVVSGAGDETLRYWKLFDKPKAKV).

This sequence belongs to the WD repeat CDC20/Fizzy family. In terms of assembly, associates with the APC/C complex. Interacts with CLB2, CLB3, CDC5, HSL1, MSN5 and PSE1. In terms of processing, phosphorylated at multiple sites by CDC28, probably in its CLB5 bound form, in S, G2 and M phase of the cell cycle, thereby blocking the association of CDH1 to the APC/C and promoting nuclear export of CDH1 by MSN5. Dephosphorylated and activated by CDC14 in late anaphase, which may be necessary for PSE1-dependent nuclear localization.

It localises to the cytoplasm. It is found in the nucleus. Functionally, activator protein that regulates the ubiquitin ligase activity and substrate specificity of the anaphase promoting complex/cyclosome (APC/C). During telophase and in the subsequent G1 phase of the cell cycle, recognizes and binds proteins containing a destruction box (D-box) and an additional degradation signal termed the KEN box including ASE1, CDC20, the B-type cyclins CLB2 and CLB3, the polo-like kinase CDC5 and HSL1, and recruits them in a C-box-dependent manner to the APC/C for ubiquitination and subsequent proteolysis. Required for exit from mitosis, cytokinesis and formation of prereplicative complexes in G1. Probably is the target of a BUB2-dependent spindle checkpoint pathway. This Saccharomyces cerevisiae (strain ATCC 204508 / S288c) (Baker's yeast) protein is APC/C activator protein CDH1 (CDH1).